Here is a 938-residue protein sequence, read N- to C-terminus: MSDYKSTLNLPETGFPMRGDLAKREPGMLARWTDDDLYGIIRAAKKGKKTFILHDGPPYANGSIHIGHSVNKILKDIIIKSKGLSGYDSPYVPGWDCHGLPIELKVEQEYGKPGEKFTAAEFRAKCREYAATQVDGQRKDFIRLGVLGDWSHPYLTMDFKTEANIIRALGKIIGNGHLHKGAKPVHWCVDCRSALAEAEVEYYDKTSPSIDVAFQAVDQDALKTKFGVSNVNGPISLVIWTTTPWTLPANRAISIAPDFDYALVQIDGQAVILAKDLVESVMQRIGVSDYTILGTVKGAELELLRFTHPFMDFDVPAILGDHVTLDAGTGAVHTAPGHGPDDYVIGQKYGLETANPVGPDGTYLPGTYPTLDGVNVFKANDIVIALLQEKGALLHVEKMQHSYPCCWRHKTPIIFRATPQWFVSMDQKGLRAQSLKEIKGVQWIPDWGQARIESMVANRPDWCISRQRTWGVPMSLFVHKDTEELHPRTLELMEEVAKRVEVDGIQAWWDLDAKEILGDEADQYVKVPDTLDVWFDSGSTHSSVVDVRPEFAGHAADMYLEGSDQHRGWFMSSLMISTAMKGKAPYRQVLTHGFTVDGQGRKMSKSIGNTVSPQDVMNKLGADILRLWVASTDYTGEMAVSDEILKRAADSYRRIRNTARFLLANLNGFDPAKDMVKPEEMVVLDRWAVGCAKAAQEDILKAYEAYDFHEVVQRLMRFCSVEMGSFYLDIIKDRQYTAKADSVARRSCQTALYHIAEALVRWMAPILSFTADEVWGYLPGEREKYVFTGEWYEGLFGLADSEAMNDAFWDELLKVRGEVNKVIEQARADKKVGGSLEAAVTLYAEPELAAKLTALGDELRFVLLTSGATVADYNDAPADAQQSEVLKGLKVALSKAEGEKCPRCWHYTQDVGKVAEHAEICGRCVSNVAGDGEKRKFA.

The 'HIGH' region signature appears at 58 to 68 (PYANGSIHIGH). At Lys-183 the chain carries N6-acetyllysine. Glu-561 serves as a coordination point for L-isoleucyl-5'-AMP. Residues 602–606 (KMSKS) carry the 'KMSKS' region motif. Lys-605 serves as a coordination point for ATP. Residues Cys-901, Cys-904, Cys-921, and Cys-924 each contribute to the Zn(2+) site.

This sequence belongs to the class-I aminoacyl-tRNA synthetase family. IleS type 1 subfamily. Monomer. Requires Zn(2+) as cofactor.

The protein resides in the cytoplasm. It catalyses the reaction tRNA(Ile) + L-isoleucine + ATP = L-isoleucyl-tRNA(Ile) + AMP + diphosphate. In terms of biological role, catalyzes the attachment of isoleucine to tRNA(Ile). As IleRS can inadvertently accommodate and process structurally similar amino acids such as valine, to avoid such errors it has two additional distinct tRNA(Ile)-dependent editing activities. One activity is designated as 'pretransfer' editing and involves the hydrolysis of activated Val-AMP. The other activity is designated 'posttransfer' editing and involves deacylation of mischarged Val-tRNA(Ile). This chain is Isoleucine--tRNA ligase, found in Escherichia coli O6:H1 (strain CFT073 / ATCC 700928 / UPEC).